The sequence spans 584 residues: UvrABC system protein C (584 aa).

Positions 12–89 (NKPGCYLFLN…IKKYRPKYNV (78 aa)) constitute a GIY-YIG domain. One can recognise a UVR domain in the interval 194 to 229 (NQVKQTLVKQMQKASDNLQFEQAKRIKDQITSLDFI).

The protein belongs to the UvrC family. As to quaternary structure, interacts with UvrB in an incision complex.

It localises to the cytoplasm. In terms of biological role, the UvrABC repair system catalyzes the recognition and processing of DNA lesions. UvrC both incises the 5' and 3' sides of the lesion. The N-terminal half is responsible for the 3' incision and the C-terminal half is responsible for the 5' incision. The protein is UvrABC system protein C of Mycoplasma capricolum subsp. capricolum (strain California kid / ATCC 27343 / NCTC 10154).